A 404-amino-acid chain; its full sequence is Immediate early response gene 5-like protein (404 aa).

3 disordered regions span residues 86–107 (AADF…EPAA), 160–231 (AALQ…APAS), and 308–327 (QEEE…EPPG). Over residues 177–194 (PLQPGPAPLPLPLPPPAP) the composition is skewed to pro residues. Positions 195–231 (AALCPRDPRAPAACSAPPGAAPPAAAASPPASPAPAS) are enriched in low complexity. Residues 308–318 (QEEEEDDEEDA) are compositionally biased toward acidic residues.

Belongs to the IER family.

The protein is Immediate early response gene 5-like protein (IER5L) of Homo sapiens (Human).